Here is a 1029-residue protein sequence, read N- to C-terminus: Eukaryotic translation initiation factor 3 subunit A (1029 aa).

The stretch at 92 to 121 (LKKFIELAEQKVTEAQAKADEIQSSLESAA) forms a coiled coil. The region spanning 339–523 (MTKAASFVLL…GVLTFESDIF (185 aa)) is the PCI domain. Positions 606–903 (TRRAIIEKRK…EEEAEQRRAA (298 aa)) form a coiled coil. Composition is skewed to basic and acidic residues over residues 621–632 (ALQKKQREEENR), 644–666 (EQQRLLDEHRERERKRMKDEQDR), 797–901 (TEKR…EQRR), and 913–924 (GPAREASPERTA). Disordered stretches follow at residues 621-666 (ALQK…EQDR) and 797-1029 (TEKR…KQQQ). Residues 943–960 (AKAAASAGEQPAAAQEAT) are compositionally biased toward low complexity. Basic and acidic residues predominate over residues 977–993 (ATRDGPSDSRDLSHARE).

This sequence belongs to the eIF-3 subunit A family. Component of the eukaryotic translation initiation factor 3 (eIF-3) complex.

Its subcellular location is the cytoplasm. Its function is as follows. RNA-binding component of the eukaryotic translation initiation factor 3 (eIF-3) complex, which is involved in protein synthesis of a specialized repertoire of mRNAs and, together with other initiation factors, stimulates binding of mRNA and methionyl-tRNAi to the 40S ribosome. The eIF-3 complex specifically targets and initiates translation of a subset of mRNAs involved in cell proliferation. In Coccidioides immitis (strain RS) (Valley fever fungus), this protein is Eukaryotic translation initiation factor 3 subunit A.